The sequence spans 303 residues: Phosphoglycerate mutase 3 (303 aa).

Substrate is bound by residues 13–20 (RHGQSELN), 26–27 (CG), R70, 120–123 (ERHY), K131, and 147–148 (RR). H14 (tele-phosphohistidine intermediate) is an active-site residue. Catalysis depends on E120, which acts as the Proton donor/acceptor. Residues 168 to 198 (NDQGSSTGYDFKEPNRHLKYGPEEKANERLP) form a disordered region. Residues 177–198 (DFKEPNRHLKYGPEEKANERLP) show a composition bias toward basic and acidic residues. 236–237 (GS) is a substrate binding site.

This sequence belongs to the phosphoglycerate mutase family. BPG-dependent PGAM subfamily.

It catalyses the reaction (2R)-2-phosphoglycerate = (2R)-3-phosphoglycerate. It functions in the pathway carbohydrate degradation; glycolysis; pyruvate from D-glyceraldehyde 3-phosphate: step 3/5. In terms of biological role, could be non-functional. The protein is Phosphoglycerate mutase 3 (GPM3) of Saccharomyces cerevisiae (strain ATCC 204508 / S288c) (Baker's yeast).